A 1004-amino-acid chain; its full sequence is MAGTDSPAAARFVYRCLLFAPAIVVGLLLPLTLPPIAAAQRHTASDNPSTYNIGGVLSNSESETYFHTIISHLNFDQQYVPRKVTYYDKTIRMDKNPIKTVFNVCDKLIENRVYAVVVSHEQTSGDLSPAAVSYTSGFYSIPVIGISSRDAAFSDKNIHVSFLRTVPPYYHQADVWLEMLSHFAYTKVIIIHSSDTDGRAILGRFQTTSQTYYDDVDVRATVELIVEFEPKLESFTEHLIDMKTAQSRVYLMYASTEDAQVIFRDAGEYNMTGEGHVWIVTEQALFANNTPDGVLGLQLEHAHSDKGHIRDSVYVLASAIKEMISNETIAEAPKDCGDSAVNWESGKRLFQYLKSRNITGETGQVAFDDNGDRIYAGYDVINIREHQKKHVVGKFSYDSMRAKMRMNINDSEIIWPGKQNRKPEGIMIPTHLKVLTIEEKPFVYVRRMGDDEFRCEPDERPCPLFNATDSTANEYCCRGYCIDLLIELSKRINFTYDLALSPDGQFGHYLLRNNTGAMTLRKEWTGLMGELVNERADMIVAPLTINPERAEYIEFSKPFKYQGITILEKKPSRSSTLVSFLQPFSNTLWILVMVSVHVVALVLYLLDRFSPFGRFKLSHSDSNEEKALNLSSAVWFAWGVLLNSGIGEGTPRSFSARVLGMVWAGFAMIIVASYTANLAAFLVLERPKTKLSGINDARLRNTMENLTCATVKGSSVDMYFRRQVELSNMYRTMEANNYATAEQAIQDVKKGKLMAFIWDSSRLEYEASKDCELVTAGELFGRSGYGVGLQKGSPWTDSVTLAILEFHESGFMEKLDKQWIFHGHVQQNCELFEKTPNTLGLKNMAGVFILVGVGIAGGVGLIIIEVIYKKHQVKKQKRLDIARHAADKWRGTIEKRKTIRASLAMQRQYNVGLNSTHPPGTISLAVDKRRYPRLGQRLGPERAWPGDAADVLRTRRPYELGKPGQSPKVMVATPAMLGRTRPQQNILPPRYSPGYTSDVSHLVV.

A signal peptide spans 1–39 (MAGTDSPAAARFVYRCLLFAPAIVVGLLLPLTLPPIAAA). The Extracellular portion of the chain corresponds to 40–585 (QRHTASDNPS…TLVSFLQPFS (546 aa)). Asn270, Asn326, Asn357, Asn409, Asn466, Asn493, and Asn513 each carry an N-linked (GlcNAc...) asparagine glycan. Residues 542 to 544 (PLT) and Arg549 each bind glycine. Residues 586–606 (NTLWILVMVSVHVVALVLYLL) traverse the membrane as a helical segment. Topologically, residues 607–663 (DRFSPFGRFKLSHSDSNEEKALNLSSAVWFAWGVLLNSGIGEGTPRSFSARVLGMVW) are cytoplasmic. Residues 664–684 (AGFAMIIVASYTANLAAFLVL) form a helical membrane-spanning segment. The Extracellular portion of the chain corresponds to 685–843 (ERPKTKLSGI…KTPNTLGLKN (159 aa)). Asn705 carries an N-linked (GlcNAc...) asparagine glycan. Glycine-binding residues include Ser715 and Asp759. The chain crosses the membrane as a helical span at residues 844-864 (MAGVFILVGVGIAGGVGLIII). The Cytoplasmic portion of the chain corresponds to 865–1004 (EVIYKKHQVK…YTSDVSHLVV (140 aa)). Positions 980 to 1004 (TRPQQNILPPRYSPGYTSDVSHLVV) are disordered. The span at 994–1004 (GYTSDVSHLVV) shows a compositional bias: polar residues.

This sequence belongs to the glutamate-gated ion channel (TC 1.A.10.1) family. As to quaternary structure, forms a heteromeric NMDA channel with Nmdar2.

Its subcellular location is the cell membrane. The protein localises to the postsynaptic cell membrane. It localises to the postsynaptic density. Its function is as follows. NMDA receptor subtype of glutamate-gated ion channels with high calcium permeability and voltage-dependent sensitivity to magnesium. Mediated by glycine. This protein plays a key role in synaptic plasticity, synaptogenesis, excitotoxicity, memory acquisition and learning. It mediates neuronal functions in glutamate neurotransmission. Is involved in the cell surface targeting of NMDA receptors. Plays a role in associative learning and in long-term memory consolidation. This is Glutamate [NMDA] receptor subunit 1 from Drosophila pseudoobscura pseudoobscura (Fruit fly).